Here is a 268-residue protein sequence, read N- to C-terminus: Protein DEEPER ROOTING 1 (268 aa).

Positions 11 to 21 (LNGKQGNKKPN) are enriched in low complexity. A disordered region spans residues 11–39 (LNGKQGNKKPNTVPITTHPAKQEPREEFS). A compositionally biased stretch (basic and acidic residues) spans 30 to 39 (AKQEPREEFS). The IGT motif signature appears at 44-50 (GLLAIGT). A disordered region spans residues 220–246 (SRAASMKKYLEDRQIPTKKESNTEDDT). Residues 227–246 (KYLEDRQIPTKKESNTEDDT) are compositionally biased toward basic and acidic residues.

This sequence belongs to the LAZY family. In terms of tissue distribution, expressed in roots.

Involved in the development of the root system architecture by influencing lateral root angles and primary root length. The polypeptide is Protein DEEPER ROOTING 1 (Prunus persica (Peach)).